Reading from the N-terminus, the 315-residue chain is MSESLRIIFAGTPDFAARHLDALLSSGHNVVGVFTQPDRPAGRGKKLMPSPVKVLAEEKGLPVFQPVSLRPQENQQLVAELQADVMVVVAYGLILPKAVLEMPRLGCINVHGSLLPRWRGAAPIQRSLWAGDAETGVTIMQMDVGLDTGDMLYKLSCPITAEDTSGTLYDKLAELGPQGLITTLKQLADGTAKPEVQDETLVTYAEKLSKEEARIDWSLSAAQLERCIRAFNPWPMSWLEIEGQPVKVWKASVIDTATNAAPGTILEANKQGIQVATGDGILNLLSLQPAGKKAMSAQDLLNSRREWFVPGNRLV.

Residues 2–189 (SESLRIIFAG…LITTLKQLAD (188 aa)) are N-terminal domain. Position 113 to 116 (113 to 116 (SLLP)) interacts with (6S)-5,6,7,8-tetrahydrofolate. Positions 210-315 (KEEARIDWSL…EWFVPGNRLV (106 aa)) are C-terminal domain.

The protein belongs to the Fmt family. As to quaternary structure, monomer.

It carries out the reaction L-methionyl-tRNA(fMet) + (6R)-10-formyltetrahydrofolate = N-formyl-L-methionyl-tRNA(fMet) + (6S)-5,6,7,8-tetrahydrofolate + H(+). Its activity is regulated as follows. Activity is optimum in the presence of Mg(2+) and K(+). Its function is as follows. Attaches a formyl group to the free amino group of methionyl-tRNA(fMet). The formyl group appears to play a dual role in the initiator identity of N-formylmethionyl-tRNA by promoting its recognition by IF2 and preventing the misappropriation of this tRNA by the elongation apparatus. This is Methionyl-tRNA formyltransferase from Escherichia coli (strain K12).